The primary structure comprises 162 residues: 2-amino-4-hydroxy-6-hydroxymethyldihydropteridine pyrophosphokinase (162 aa).

This sequence belongs to the HPPK family.

It carries out the reaction 6-hydroxymethyl-7,8-dihydropterin + ATP = (7,8-dihydropterin-6-yl)methyl diphosphate + AMP + H(+). Its pathway is cofactor biosynthesis; tetrahydrofolate biosynthesis; 2-amino-4-hydroxy-6-hydroxymethyl-7,8-dihydropteridine diphosphate from 7,8-dihydroneopterin triphosphate: step 4/4. Functionally, catalyzes the transfer of pyrophosphate from adenosine triphosphate (ATP) to 6-hydroxymethyl-7,8-dihydropterin, an enzymatic step in folate biosynthesis pathway. The sequence is that of 2-amino-4-hydroxy-6-hydroxymethyldihydropteridine pyrophosphokinase (folK) from Pseudomonas aeruginosa (strain ATCC 15692 / DSM 22644 / CIP 104116 / JCM 14847 / LMG 12228 / 1C / PRS 101 / PAO1).